The chain runs to 218 residues: Adenylate kinase (218 aa).

10–15 (GAGKGT) lines the ATP pocket. The NMP stretch occupies residues 30-59 (STGDMLRAAVKAGTPLGLEAKAIMDAGGLV). AMP is bound by residues threonine 31, arginine 36, 57-59 (GLV), 85-88 (GFPR), and glutamine 92. The tract at residues 122–159 (GRRVHLASGRTYHVTFNPPKAAGKDDVTGEDLVQRDDD) is LID. Residues arginine 123 and 132-133 (TY) contribute to the ATP site. The AMP site is built by arginine 156 and arginine 167. Arginine 203 contacts ATP.

The protein belongs to the adenylate kinase family. Monomer.

The protein localises to the cytoplasm. It carries out the reaction AMP + ATP = 2 ADP. It participates in purine metabolism; AMP biosynthesis via salvage pathway; AMP from ADP: step 1/1. Functionally, catalyzes the reversible transfer of the terminal phosphate group between ATP and AMP. Plays an important role in cellular energy homeostasis and in adenine nucleotide metabolism. This Chromobacterium violaceum (strain ATCC 12472 / DSM 30191 / JCM 1249 / CCUG 213 / NBRC 12614 / NCIMB 9131 / NCTC 9757 / MK) protein is Adenylate kinase.